We begin with the raw amino-acid sequence, 457 residues long: Multidrug resistance protein MdtK (457 aa).

Transmembrane regions (helical) follow at residues 11-31 (LLAL…MGFV), 53-73 (IWLP…PVIA), 93-113 (WLAG…GYII), 127-147 (AVGY…FQVA), 160-180 (GMVM…IFIY), 189-209 (GGVG…LAMV), 243-263 (LPIA…ALLV), 276-296 (IALN…AAVT), 314-334 (AART…IFTV), 350-370 (VVTL…SDSI), 387-407 (IFYI…YILA), and 418-438 (PAGF…MMML).

The protein belongs to the multi antimicrobial extrusion (MATE) (TC 2.A.66.1) family. MdtK subfamily.

The protein localises to the cell inner membrane. In terms of biological role, multidrug efflux pump that functions probably as a Na(+)/drug antiporter. The protein is Multidrug resistance protein MdtK of Escherichia coli O45:K1 (strain S88 / ExPEC).